We begin with the raw amino-acid sequence, 142 residues long: ATP synthase epsilon chain (142 aa).

This sequence belongs to the ATPase epsilon chain family. As to quaternary structure, F-type ATPases have 2 components, CF(1) - the catalytic core - and CF(0) - the membrane proton channel. CF(1) has five subunits: alpha(3), beta(3), gamma(1), delta(1), epsilon(1). CF(0) has three main subunits: a, b and c.

It localises to the cell inner membrane. Its function is as follows. Produces ATP from ADP in the presence of a proton gradient across the membrane. The chain is ATP synthase epsilon chain from Shewanella baltica (strain OS155 / ATCC BAA-1091).